We begin with the raw amino-acid sequence, 209 residues long: DNA transformation protein TfoX1 (209 aa).

The protein belongs to the Sxy/TfoX family.

In terms of biological role, required for DNA transformation jointly with TfoY (tfoX2). This Aliivibrio fischeri (strain ATCC 700601 / ES114) (Vibrio fischeri) protein is DNA transformation protein TfoX1.